Here is a 374-residue protein sequence, read N- to C-terminus: tRNA 2-selenouridine synthase (374 aa).

The Rhodanese domain occupies 12-136; sequence FLRDVPMLDT…MRGFLLQTID (125 aa). Catalysis depends on Cys95, which acts as the S-selanylcysteine intermediate.

This sequence belongs to the SelU family. In terms of assembly, monomer.

It carries out the reaction 5-methylaminomethyl-2-thiouridine(34) in tRNA + selenophosphate + (2E)-geranyl diphosphate + H2O + H(+) = 5-methylaminomethyl-2-selenouridine(34) in tRNA + (2E)-thiogeraniol + phosphate + diphosphate. The enzyme catalyses 5-methylaminomethyl-2-thiouridine(34) in tRNA + (2E)-geranyl diphosphate = 5-methylaminomethyl-S-(2E)-geranyl-thiouridine(34) in tRNA + diphosphate. It catalyses the reaction 5-methylaminomethyl-S-(2E)-geranyl-thiouridine(34) in tRNA + selenophosphate + H(+) = 5-methylaminomethyl-2-(Se-phospho)selenouridine(34) in tRNA + (2E)-thiogeraniol. The catalysed reaction is 5-methylaminomethyl-2-(Se-phospho)selenouridine(34) in tRNA + H2O = 5-methylaminomethyl-2-selenouridine(34) in tRNA + phosphate. In terms of biological role, involved in the post-transcriptional modification of the uridine at the wobble position (U34) of tRNA(Lys), tRNA(Glu) and tRNA(Gln). Catalyzes the conversion of 2-thiouridine (S2U-RNA) to 2-selenouridine (Se2U-RNA). Acts in a two-step process involving geranylation of 2-thiouridine (S2U) to S-geranyl-2-thiouridine (geS2U) and subsequent selenation of the latter derivative to 2-selenouridine (Se2U) in the tRNA chain. In Bordetella petrii (strain ATCC BAA-461 / DSM 12804 / CCUG 43448), this protein is tRNA 2-selenouridine synthase.